The primary structure comprises 201 residues: Prostamide/prostaglandin F synthase (201 aa).

Belongs to the peroxiredoxin-like PRXL2 family. Prostamide/prostaglandin F synthase subfamily.

Its subcellular location is the cytoplasm. It localises to the cytosol. The catalysed reaction is prostaglandin H2 + [thioredoxin]-dithiol = prostaglandin F2alpha + [thioredoxin]-disulfide. It carries out the reaction prostamide F2alpha + [thioredoxin]-disulfide = prostamide H2 + [thioredoxin]-dithiol. Functionally, catalyzes the reduction of prostaglandin-ethanolamide H(2) (prostamide H(2)) to prostamide F(2alpha) with NADPH as proton donor. Also able to reduce prostaglandin H(2) to prostaglandin F(2alpha). The chain is Prostamide/prostaglandin F synthase (prxl2b) from Xenopus tropicalis (Western clawed frog).